A 275-amino-acid chain; its full sequence is Formamidopyrimidine-DNA glycosylase (275 aa).

Proline 2 functions as the Schiff-base intermediate with DNA in the catalytic mechanism. Glutamate 3 (proton donor) is an active-site residue. The active-site Proton donor; for beta-elimination activity is the lysine 58. Histidine 91 and arginine 110 together coordinate DNA. The FPG-type zinc-finger motif lies at 238–272; sequence QVYGQTGKSCPRCGQAIVKLKVGGRGTHICPKCQK. Arginine 262 acts as the Proton donor; for delta-elimination activity in catalysis.

It belongs to the FPG family. As to quaternary structure, monomer. The cofactor is Zn(2+).

The enzyme catalyses Hydrolysis of DNA containing ring-opened 7-methylguanine residues, releasing 2,6-diamino-4-hydroxy-5-(N-methyl)formamidopyrimidine.. It catalyses the reaction 2'-deoxyribonucleotide-(2'-deoxyribose 5'-phosphate)-2'-deoxyribonucleotide-DNA = a 3'-end 2'-deoxyribonucleotide-(2,3-dehydro-2,3-deoxyribose 5'-phosphate)-DNA + a 5'-end 5'-phospho-2'-deoxyribonucleoside-DNA + H(+). Functionally, involved in base excision repair of DNA damaged by oxidation or by mutagenic agents. Acts as a DNA glycosylase that recognizes and removes damaged bases. Has a preference for oxidized purines, such as 7,8-dihydro-8-oxoguanine (8-oxoG). Has AP (apurinic/apyrimidinic) lyase activity and introduces nicks in the DNA strand. Cleaves the DNA backbone by beta-delta elimination to generate a single-strand break at the site of the removed base with both 3'- and 5'-phosphates. The polypeptide is Formamidopyrimidine-DNA glycosylase (Streptococcus pyogenes serotype M3 (strain ATCC BAA-595 / MGAS315)).